A 394-amino-acid chain; its full sequence is Mitogen-activated protein kinase 2 (394 aa).

Residues 1 to 10 (MDGPAQQTDT) are compositionally biased toward polar residues. Residues 1–27 (MDGPAQQTDTVMAEAAAAQQPAPPSQP) are disordered. The 286-residue stretch at 61-346 (KPPIMPIGKG…VEDALAHPYL (286 aa)) folds into the Protein kinase domain. ATP contacts are provided by residues 67 to 75 (IGKGAYGIV) and Lys90. The active-site Proton acceptor is Asp187. Thr219 is modified (phosphothreonine). The short motif at 219-221 (TEY) is the TXY element. Residue Tyr221 is modified to Phosphotyrosine. Position 224 is a phosphothreonine (Thr224).

The protein belongs to the protein kinase superfamily. CMGC Ser/Thr protein kinase family. MAP kinase subfamily. It depends on Mg(2+) as a cofactor. Activated by cold, wounding and UV-C in a cultivar-dependent manner; phosphorylated at Tyr-221 in cv. Subicho but not in cv. Pungchon. In terms of tissue distribution, expressed constitutively in roots, stems, flowers and fruits of the hot pepper (cv. Subicho).

The enzyme catalyses L-seryl-[protein] + ATP = O-phospho-L-seryl-[protein] + ADP + H(+). It carries out the reaction L-threonyl-[protein] + ATP = O-phospho-L-threonyl-[protein] + ADP + H(+). Its activity is regulated as follows. Activated by threonine and tyrosine phosphorylation. In terms of biological role, protein kinase involved in oxidative stress-mediated and innate immune MAP kinase signaling cascades. The sequence is that of Mitogen-activated protein kinase 2 from Capsicum annuum (Capsicum pepper).